Reading from the N-terminus, the 639-residue chain is 1-deoxy-D-xylulose-5-phosphate synthase (639 aa).

Residues histidine 76 and 117 to 119 each bind thiamine diphosphate; that span reads AHS. Aspartate 148 serves as a coordination point for Mg(2+). Residues 149–150, asparagine 181, tyrosine 288, and glutamate 370 contribute to the thiamine diphosphate site; that span reads GS. Residue asparagine 181 coordinates Mg(2+).

This sequence belongs to the transketolase family. DXPS subfamily. As to quaternary structure, homodimer. Requires Mg(2+) as cofactor. Thiamine diphosphate serves as cofactor.

It carries out the reaction D-glyceraldehyde 3-phosphate + pyruvate + H(+) = 1-deoxy-D-xylulose 5-phosphate + CO2. It participates in metabolic intermediate biosynthesis; 1-deoxy-D-xylulose 5-phosphate biosynthesis; 1-deoxy-D-xylulose 5-phosphate from D-glyceraldehyde 3-phosphate and pyruvate: step 1/1. Its function is as follows. Catalyzes the acyloin condensation reaction between C atoms 2 and 3 of pyruvate and glyceraldehyde 3-phosphate to yield 1-deoxy-D-xylulose-5-phosphate (DXP). This is 1-deoxy-D-xylulose-5-phosphate synthase from Leptothrix cholodnii (strain ATCC 51168 / LMG 8142 / SP-6) (Leptothrix discophora (strain SP-6)).